The sequence spans 710 residues: Polyribonucleotide nucleotidyltransferase (710 aa).

Residues Asp-489 and Asp-495 each coordinate Mg(2+). The KH domain occupies 556 to 615 (PKIDTIKIDVDKIKVVIGKGGETIDKIIAETGVKIDIDDEGNVSIYSSDQAAINRTKEII). The 69-residue stretch at 625–693 (GEVYHAKVVR…EKGRVDASMK (69 aa)) folds into the S1 motif domain. The tract at residues 691–710 (SMKALIPRPPKPEKKEEKHD) is disordered. Residues 700 to 710 (PKPEKKEEKHD) are compositionally biased toward basic and acidic residues.

This sequence belongs to the polyribonucleotide nucleotidyltransferase family. It depends on Mg(2+) as a cofactor.

The protein localises to the cytoplasm. It carries out the reaction RNA(n+1) + phosphate = RNA(n) + a ribonucleoside 5'-diphosphate. Its function is as follows. Involved in mRNA degradation. Catalyzes the phosphorolysis of single-stranded polyribonucleotides processively in the 3'- to 5'-direction. The polypeptide is Polyribonucleotide nucleotidyltransferase (Streptococcus pyogenes serotype M2 (strain MGAS10270)).